Reading from the N-terminus, the 184-residue chain is Ribosome-recycling factor (184 aa).

The protein belongs to the RRF family.

Its subcellular location is the cytoplasm. Functionally, responsible for the release of ribosomes from messenger RNA at the termination of protein biosynthesis. May increase the efficiency of translation by recycling ribosomes from one round of translation to another. The protein is Ribosome-recycling factor of Clostridium botulinum (strain Okra / Type B1).